The primary structure comprises 203 residues: Small ribosomal subunit protein uS4 (203 aa).

The tract at residues 15–46 (LGENIWGRPKSSVNRRSYGPGQHGQRRKSKVS) is disordered. One can recognise an S4 RNA-binding domain in the interval 94–154 (QRLDMVVYRA…KKAKEMALIA (61 aa)).

This sequence belongs to the universal ribosomal protein uS4 family. Part of the 30S ribosomal subunit. Contacts protein S5. The interaction surface between S4 and S5 is involved in control of translational fidelity.

One of the primary rRNA binding proteins, it binds directly to 16S rRNA where it nucleates assembly of the body of the 30S subunit. Its function is as follows. With S5 and S12 plays an important role in translational accuracy. In Novosphingobium aromaticivorans (strain ATCC 700278 / DSM 12444 / CCUG 56034 / CIP 105152 / NBRC 16084 / F199), this protein is Small ribosomal subunit protein uS4.